A 244-amino-acid chain; its full sequence is Ribonuclease 3 (244 aa).

The RNase III domain maps to 17–146 (FEKKMQELNL…FVGALYLDQG (130 aa)). Glu59 provides a ligand contact to Mg(2+). The active site involves Asp63. Mg(2+) contacts are provided by Asp132 and Glu135. The active site involves Glu135. In terms of domain architecture, DRBM spans 172–241 (DFKTQFQEYV…AERAYKILKN (70 aa)).

This sequence belongs to the ribonuclease III family. In terms of assembly, homodimer. The cofactor is Mg(2+).

The protein localises to the cytoplasm. It carries out the reaction Endonucleolytic cleavage to 5'-phosphomonoester.. Digests double-stranded RNA. Involved in the processing of primary rRNA transcript to yield the immediate precursors to the large and small rRNAs (23S and 16S). Processes some mRNAs, and tRNAs when they are encoded in the rRNA operon. Processes pre-crRNA and tracrRNA of type II CRISPR loci if present in the organism. This is Ribonuclease 3 from Staphylococcus saprophyticus subsp. saprophyticus (strain ATCC 15305 / DSM 20229 / NCIMB 8711 / NCTC 7292 / S-41).